Reading from the N-terminus, the 246-residue chain is UDP-N-acetyl-D-mannosaminuronic acid transferase (246 aa).

Belongs to the glycosyltransferase 26 family.

It carries out the reaction UDP-N-acetyl-alpha-D-mannosaminouronate + N-acetyl-alpha-D-glucosaminyl-di-trans,octa-cis-undecaprenyl diphosphate = beta-D-ManNAcA-(1-&gt;4)-alpha-D-GlcNAc-di-trans,octa-cis-undecaprenyl diphosphate + UDP + H(+). Its pathway is bacterial outer membrane biogenesis; enterobacterial common antigen biosynthesis. In terms of biological role, catalyzes the synthesis of Und-PP-GlcNAc-ManNAcA (Lipid II), the second lipid-linked intermediate involved in enterobacterial common antigen (ECA) synthesis. The protein is UDP-N-acetyl-D-mannosaminuronic acid transferase of Salmonella agona (strain SL483).